The chain runs to 129 residues: Fluoride-specific ion channel FluC (129 aa).

The next 3 membrane-spanning stretches (helical) occupy residues 20 to 40 (WFLG…TLAA), 67 to 87 (LLII…TAEI), and 96 to 116 (IMTA…MMLL). 2 residues coordinate Na(+): Gly75 and Thr78.

The protein belongs to the fluoride channel Fluc/FEX (TC 1.A.43) family.

It localises to the cell inner membrane. It catalyses the reaction fluoride(in) = fluoride(out). With respect to regulation, na(+) is not transported, but it plays an essential structural role and its presence is essential for fluoride channel function. Fluoride-specific ion channel. Important for reducing fluoride concentration in the cell, thus reducing its toxicity. The chain is Fluoride-specific ion channel FluC from Desulfovibrio desulfuricans (strain ATCC 27774 / DSM 6949 / MB).